Reading from the N-terminus, the 501-residue chain is Glycerol kinase (501 aa).

Threonine 11 is a binding site for ADP. Threonine 11, threonine 12, and serine 13 together coordinate ATP. Residue threonine 11 coordinates sn-glycerol 3-phosphate. Residue arginine 15 participates in ADP binding. Sn-glycerol 3-phosphate contacts are provided by arginine 81, glutamate 82, tyrosine 133, and aspartate 242. The glycerol site is built by arginine 81, glutamate 82, tyrosine 133, aspartate 242, and glutamine 243. Threonine 264 and glycine 307 together coordinate ADP. Threonine 264, glycine 307, glutamine 311, and glycine 409 together coordinate ATP. Positions 409 and 413 each coordinate ADP.

This sequence belongs to the FGGY kinase family.

The enzyme catalyses glycerol + ATP = sn-glycerol 3-phosphate + ADP + H(+). It functions in the pathway polyol metabolism; glycerol degradation via glycerol kinase pathway; sn-glycerol 3-phosphate from glycerol: step 1/1. Inhibited by fructose 1,6-bisphosphate (FBP). Key enzyme in the regulation of glycerol uptake and metabolism. Catalyzes the phosphorylation of glycerol to yield sn-glycerol 3-phosphate. The sequence is that of Glycerol kinase from Borrelia garinii subsp. bavariensis (strain ATCC BAA-2496 / DSM 23469 / PBi) (Borreliella bavariensis).